The sequence spans 509 residues: ATP synthase subunit alpha (509 aa).

169–176 lines the ATP pocket; that stretch reads GDRQTGKT.

This sequence belongs to the ATPase alpha/beta chains family. As to quaternary structure, F-type ATPases have 2 components, CF(1) - the catalytic core - and CF(0) - the membrane proton channel. CF(1) has five subunits: alpha(3), beta(3), gamma(1), delta(1), epsilon(1). CF(0) has three main subunits: a(1), b(2) and c(9-12). The alpha and beta chains form an alternating ring which encloses part of the gamma chain. CF(1) is attached to CF(0) by a central stalk formed by the gamma and epsilon chains, while a peripheral stalk is formed by the delta and b chains.

The protein resides in the cell inner membrane. It carries out the reaction ATP + H2O + 4 H(+)(in) = ADP + phosphate + 5 H(+)(out). In terms of biological role, produces ATP from ADP in the presence of a proton gradient across the membrane. The alpha chain is a regulatory subunit. The protein is ATP synthase subunit alpha of Sinorhizobium medicae (strain WSM419) (Ensifer medicae).